The following is a 111-amino-acid chain: Probable U2 small nuclear ribonucleoprotein B'' (111 aa).

Residues 4-83 (NTLYVNNLND…KEMKIQYAHS (80 aa)) form the RRM domain.

As to quaternary structure, belongs to the 40S cdc5-associated complex (or cwf complex), a spliceosome sub-complex reminiscent of a late-stage spliceosome composed of the U2, U5 and U6 snRNAs and at least brr2, cdc5, cwf2/prp3, cwf3/syf1, cwf4/syf3, cwf5/ecm2, spp42/cwf6, cwf7/spf27, cwf8, cwf9, cwf10, cwf11, cwf12, prp45/cwf13, cwf14, cwf15, cwf16, cwf17, cwf18, cwf19, cwf20, cwf21, cwf22, cwf23, cwf24, cwf25, cwf26, cyp7/cwf27, cwf28, cwf29/ist3, lea1, msl1, prp5/cwf1, prp10, prp12/sap130, prp17, prp22, sap61, sap62, sap114, sap145, slu7, smb1, smd1, smd3, smf1, smg1 and syf2.

It is found in the nucleus. In terms of biological role, involved in pre-mRNA splicing. This protein is associated with snRNP U2. It binds stem loop IV of U2 snRNA. The polypeptide is Probable U2 small nuclear ribonucleoprotein B'' (msl1) (Schizosaccharomyces pombe (strain 972 / ATCC 24843) (Fission yeast)).